A 281-amino-acid chain; its full sequence is NADPH-dependent 7-cyano-7-deazaguanine reductase (281 aa).

87–89 is a binding site for substrate; the sequence is VES. 89-90 is a binding site for NADPH; the sequence is SK. Cys-188 serves as the catalytic Thioimide intermediate. The active-site Proton donor is Asp-195. Position 227–228 (227–228) interacts with substrate; it reads HE. 256-257 contributes to the NADPH binding site; it reads RG.

It belongs to the GTP cyclohydrolase I family. QueF type 2 subfamily. Homodimer.

The protein localises to the cytoplasm. It catalyses the reaction 7-aminomethyl-7-carbaguanine + 2 NADP(+) = 7-cyano-7-deazaguanine + 2 NADPH + 3 H(+). Its pathway is tRNA modification; tRNA-queuosine biosynthesis. Its function is as follows. Catalyzes the NADPH-dependent reduction of 7-cyano-7-deazaguanine (preQ0) to 7-aminomethyl-7-deazaguanine (preQ1). The protein is NADPH-dependent 7-cyano-7-deazaguanine reductase of Aliivibrio fischeri (strain ATCC 700601 / ES114) (Vibrio fischeri).